The following is a 122-amino-acid chain: Small ribosomal subunit protein bS6 (122 aa).

This sequence belongs to the bacterial ribosomal protein bS6 family.

Its function is as follows. Binds together with bS18 to 16S ribosomal RNA. This chain is Small ribosomal subunit protein bS6 (rpsF), found in Neisseria meningitidis serogroup B (strain ATCC BAA-335 / MC58).